The following is a 186-amino-acid chain: Nicotinamidase/pyrazinamidase (186 aa).

Asp-8 (proton acceptor) is an active-site residue. Residues Asp-49, His-51, His-57, and His-71 each contribute to the Fe cation site. Residue Lys-96 is part of the active site. Cys-138 acts as the Nucleophile in catalysis.

The protein belongs to the isochorismatase family. Monomer. Mn(2+) serves as cofactor. The cofactor is Fe(2+).

It carries out the reaction nicotinamide + H2O = nicotinate + NH4(+). It catalyses the reaction pyrazinamide + H2O = pyrazine-2-carboxylate + NH4(+). It participates in cofactor biosynthesis; nicotinate biosynthesis; nicotinate from nicotinamide: step 1/1. Its activity is regulated as follows. Is inhibited by Cu(2+), Zn(2+) and Fe(3+). Catalyzes the deamidation of nicotinamide (NAM) into nicotinate. Likely functions in the cyclical salvage pathway for production of NAD from nicotinamide. Functionally, is involved in the activation of the first-line antituberculous drug pyrazinamide (PZA) by converting it into the active form, pyrazinoic acid. The chain is Nicotinamidase/pyrazinamidase from Mycobacterium tuberculosis (strain ATCC 25618 / H37Rv).